A 221-amino-acid polypeptide reads, in one-letter code: UPF0502 protein PSPA7_1674 (221 aa).

The protein belongs to the UPF0502 family.

The chain is UPF0502 protein PSPA7_1674 from Pseudomonas paraeruginosa (strain DSM 24068 / PA7) (Pseudomonas aeruginosa (strain PA7)).